We begin with the raw amino-acid sequence, 219 residues long: Probable GTP-binding protein EngB (219 aa).

Positions 31 to 205 constitute an EngB-type G domain; that stretch reads VGVEIAFAGR…LSILNEWCHP (175 aa). Residues 39-46, 66-70, 84-87, 151-154, and 184-186 each bind GTP; these read GRSNAGKS, GRTQL, DLPG, TKSD, and FSA. Positions 46 and 68 each coordinate Mg(2+).

Belongs to the TRAFAC class TrmE-Era-EngA-EngB-Septin-like GTPase superfamily. EngB GTPase family. The cofactor is Mg(2+).

In terms of biological role, necessary for normal cell division and for the maintenance of normal septation. The chain is Probable GTP-binding protein EngB from Shewanella sp. (strain MR-7).